The primary structure comprises 308 residues: Glycerol-3-phosphate dehydrogenase [NAD(P)+] (308 aa).

Residues Trp-15, Arg-35, Arg-36, and Lys-83 each coordinate NADPH. Sn-glycerol 3-phosphate contacts are provided by Lys-83 and Gly-111. Ser-115 contacts NADPH. Sn-glycerol 3-phosphate-binding residues include Lys-166, Asp-219, Ser-229, Arg-230, and Asn-231. Lys-166 functions as the Proton acceptor in the catalytic mechanism. Arg-230 contributes to the NADPH binding site. Glu-256 lines the NADPH pocket.

It belongs to the NAD-dependent glycerol-3-phosphate dehydrogenase family.

It is found in the cytoplasm. The enzyme catalyses sn-glycerol 3-phosphate + NAD(+) = dihydroxyacetone phosphate + NADH + H(+). It catalyses the reaction sn-glycerol 3-phosphate + NADP(+) = dihydroxyacetone phosphate + NADPH + H(+). It functions in the pathway membrane lipid metabolism; glycerophospholipid metabolism. Its function is as follows. Catalyzes the reduction of the glycolytic intermediate dihydroxyacetone phosphate (DHAP) to sn-glycerol 3-phosphate (G3P), the key precursor for phospholipid synthesis. The chain is Glycerol-3-phosphate dehydrogenase [NAD(P)+] from Synechococcus elongatus (strain ATCC 33912 / PCC 7942 / FACHB-805) (Anacystis nidulans R2).